Here is a 340-residue protein sequence, read N- to C-terminus: S-adenosylmethionine:tRNA ribosyltransferase-isomerase (340 aa).

Belongs to the QueA family. In terms of assembly, monomer.

The protein resides in the cytoplasm. It carries out the reaction 7-aminomethyl-7-carbaguanosine(34) in tRNA + S-adenosyl-L-methionine = epoxyqueuosine(34) in tRNA + adenine + L-methionine + 2 H(+). The protein operates within tRNA modification; tRNA-queuosine biosynthesis. Its function is as follows. Transfers and isomerizes the ribose moiety from AdoMet to the 7-aminomethyl group of 7-deazaguanine (preQ1-tRNA) to give epoxyqueuosine (oQ-tRNA). This chain is S-adenosylmethionine:tRNA ribosyltransferase-isomerase, found in Campylobacter concisus (strain 13826).